The chain runs to 401 residues: Elongation factor Tu (401 aa).

In terms of domain architecture, tr-type G spans 10–211; it reads KPHLNVGTIG…ALDTFVPNPK (202 aa). The segment at 19 to 26 is G1; sequence GHVDHGKT. 19-26 contributes to the GTP binding site; it reads GHVDHGKT. Residue T26 participates in Mg(2+) binding. A G2 region spans residues 62–66; that stretch reads GITIA. Positions 83 to 86 are G3; it reads DCPG. GTP is bound by residues 83 to 87 and 138 to 141; these read DCPGH and NKAD. The interval 138–141 is G4; that stretch reads NKAD. The interval 179–181 is G5; that stretch reads SAV.

This sequence belongs to the TRAFAC class translation factor GTPase superfamily. Classic translation factor GTPase family. EF-Tu/EF-1A subfamily. Monomer.

Its subcellular location is the cytoplasm. It catalyses the reaction GTP + H2O = GDP + phosphate + H(+). Functionally, GTP hydrolase that promotes the GTP-dependent binding of aminoacyl-tRNA to the A-site of ribosomes during protein biosynthesis. The sequence is that of Elongation factor Tu from Leptospira interrogans serogroup Icterohaemorrhagiae serovar copenhageni (strain Fiocruz L1-130).